A 447-amino-acid chain; its full sequence is UDP-glycosyltransferase 79B10 (447 aa).

Residues serine 260, 319–321, 336–344, and 358–361 contribute to the UDP-alpha-D-glucose site; these read VQQ, HCGFGSMWE, and LADQ.

Belongs to the UDP-glycosyltransferase family.

This is UDP-glycosyltransferase 79B10 (UGT79B10) from Arabidopsis thaliana (Mouse-ear cress).